Here is a 193-residue protein sequence, read N- to C-terminus: dCTP deaminase (193 aa).

DCTP is bound by residues 110–115 (RSSLAR), Asp-128, 136–138 (VLE), Tyr-171, Lys-178, and Gln-182. Glu-138 (proton donor/acceptor) is an active-site residue. The disordered stretch occupies residues 171-193 (YNKRKNAKYKDQQDAVASRISQD).

It belongs to the dCTP deaminase family. In terms of assembly, homotrimer.

The enzyme catalyses dCTP + H2O + H(+) = dUTP + NH4(+). Its pathway is pyrimidine metabolism; dUMP biosynthesis; dUMP from dCTP (dUTP route): step 1/2. In terms of biological role, catalyzes the deamination of dCTP to dUTP. In Shewanella oneidensis (strain ATCC 700550 / JCM 31522 / CIP 106686 / LMG 19005 / NCIMB 14063 / MR-1), this protein is dCTP deaminase.